Here is a 141-residue protein sequence, read N- to C-terminus: HTH-type transcriptional repressor NsrR (141 aa).

Residues 2–129 (QLTSFTDYAL…DDCTIEELLS (128 aa)) enclose the HTH rrf2-type domain. Residues 28-51 (ITEVTDLFGVSRNHMVKVINRLGQ) constitute a DNA-binding region (H-T-H motif). 3 residues coordinate [2Fe-2S] cluster: C91, C96, and C102.

[2Fe-2S] cluster serves as cofactor.

In terms of biological role, nitric oxide-sensitive repressor of genes involved in protecting the cell against nitrosative stress. May require iron for activity. The polypeptide is HTH-type transcriptional repressor NsrR (Vibrio campbellii (strain ATCC BAA-1116)).